Here is a 602-residue protein sequence, read N- to C-terminus: Elongation factor 4 (602 aa).

Residues 8 to 189 enclose the tr-type G domain; the sequence is KNIRNFSIIA…KIITTIPAPS (182 aa). Residues 20–25 and 136–139 each bind GTP; these read DHGKST and NKID.

The protein belongs to the TRAFAC class translation factor GTPase superfamily. Classic translation factor GTPase family. LepA subfamily.

Its subcellular location is the cell inner membrane. The enzyme catalyses GTP + H2O = GDP + phosphate + H(+). Functionally, required for accurate and efficient protein synthesis under certain stress conditions. May act as a fidelity factor of the translation reaction, by catalyzing a one-codon backward translocation of tRNAs on improperly translocated ribosomes. Back-translocation proceeds from a post-translocation (POST) complex to a pre-translocation (PRE) complex, thus giving elongation factor G a second chance to translocate the tRNAs correctly. Binds to ribosomes in a GTP-dependent manner. The polypeptide is Elongation factor 4 (Helicobacter pylori (strain G27)).